Here is a 226-residue protein sequence, read N- to C-terminus: V-type proton ATPase subunit E 2 (226 aa).

The protein belongs to the V-ATPase E subunit family. V-ATPase is a heteromultimeric enzyme made up of two complexes: the ATP-hydrolytic V1 complex and the proton translocation V0 complex. The V1 complex consists of three catalytic AB heterodimers that form a heterohexamer, three peripheral stalks each consisting of EG heterodimers, one central rotor including subunits D and F, and the regulatory subunits C and H. The proton translocation complex V0 consists of the proton transport subunit a, a ring of proteolipid subunits c9c'', rotary subunit d, subunits e and f, and the accessory subunits ATP6AP1/Ac45 and ATP6AP2/PRR. In terms of tissue distribution, testis specific.

Subunit of the V1 complex of vacuolar(H+)-ATPase (V-ATPase), a multisubunit enzyme composed of a peripheral complex (V1) that hydrolyzes ATP and a membrane integral complex (V0) that translocates protons. V-ATPase is responsible for acidifying and maintaining the pH of intracellular compartments and in some cell types, is targeted to the plasma membrane, where it is responsible for acidifying the extracellular environment. In Mus musculus (Mouse), this protein is V-type proton ATPase subunit E 2 (Atp6v1e2).